The chain runs to 394 residues: Elongation factor Tu 2 (394 aa).

In terms of domain architecture, tr-type G spans 10–204; it reads KPHVNVGTIG…FLDSYIPEPE (195 aa). The segment at 19–26 is G1; sequence GHVDHGKT. 19–26 lines the GTP pocket; sequence GHVDHGKT. Position 26 (T26) interacts with Mg(2+). A G2 region spans residues 60–64; the sequence is GITIN. The G3 stretch occupies residues 81-84; sequence DCPG. Residues 81–85 and 136–139 each bind GTP; these read DCPGH and NKCD. The interval 136 to 139 is G4; sequence NKCD. Residues 174 to 176 form a G5 region; the sequence is SAL.

It belongs to the TRAFAC class translation factor GTPase superfamily. Classic translation factor GTPase family. EF-Tu/EF-1A subfamily. As to quaternary structure, monomer.

Its subcellular location is the cytoplasm. The catalysed reaction is GTP + H2O = GDP + phosphate + H(+). In terms of biological role, GTP hydrolase that promotes the GTP-dependent binding of aminoacyl-tRNA to the A-site of ribosomes during protein biosynthesis. The protein is Elongation factor Tu 2 of Shigella flexneri serotype 5b (strain 8401).